The following is a 161-amino-acid chain: Protein-export protein SecB (161 aa).

Residues 141 to 161 (KKQQETAGEQPDQPADTITRH) are disordered.

The protein belongs to the SecB family. As to quaternary structure, homotetramer, a dimer of dimers. One homotetramer interacts with 1 SecA dimer.

It localises to the cytoplasm. Its function is as follows. One of the proteins required for the normal export of preproteins out of the cell cytoplasm. It is a molecular chaperone that binds to a subset of precursor proteins, maintaining them in a translocation-competent state. It also specifically binds to its receptor SecA. This Nitrosomonas europaea (strain ATCC 19718 / CIP 103999 / KCTC 2705 / NBRC 14298) protein is Protein-export protein SecB.